A 320-amino-acid polypeptide reads, in one-letter code: Cyclin-D6-1 (320 aa).

Residues H279–E320 are disordered.

This sequence belongs to the cyclin family. Cyclin D subfamily.

The sequence is that of Cyclin-D6-1 (CYCD6-1) from Oryza sativa subsp. japonica (Rice).